The following is a 603-amino-acid chain: Proline--tRNA ligase (603 aa).

This sequence belongs to the class-II aminoacyl-tRNA synthetase family. ProS type 1 subfamily. As to quaternary structure, homodimer.

It localises to the cytoplasm. It catalyses the reaction tRNA(Pro) + L-proline + ATP = L-prolyl-tRNA(Pro) + AMP + diphosphate. Catalyzes the attachment of proline to tRNA(Pro) in a two-step reaction: proline is first activated by ATP to form Pro-AMP and then transferred to the acceptor end of tRNA(Pro). As ProRS can inadvertently accommodate and process non-cognate amino acids such as alanine and cysteine, to avoid such errors it has two additional distinct editing activities against alanine. One activity is designated as 'pretransfer' editing and involves the tRNA(Pro)-independent hydrolysis of activated Ala-AMP. The other activity is designated 'posttransfer' editing and involves deacylation of mischarged Ala-tRNA(Pro). The misacylated Cys-tRNA(Pro) is not edited by ProRS. The polypeptide is Proline--tRNA ligase (Microcystis aeruginosa (strain NIES-843 / IAM M-2473)).